We begin with the raw amino-acid sequence, 511 residues long: Cytochrome P450 monooxygenase esdpI (511 aa).

The helical transmembrane segment at 14–34 threads the bilayer; sequence VRAGLAIGVAILAIIVLFPGI. Position 453 (Cys453) interacts with heme.

It belongs to the cytochrome P450 family. Heme is required as a cofactor.

The protein localises to the membrane. The protein operates within secondary metabolite biosynthesis; terpenoid biosynthesis. In terms of biological role, cytochrome P450 monooxygenase; part of the cluster that mediates the biosynthesis of shearones, diterpenoid pyrones (DPs) which are structurally diverse meroterpenoids consisting of a diterpene linked by a pyrone, and which may exhibit a range of bioactivities. Whitin the pathway, esdpI takes part in the molecular scaffold modification via the hydroxylation at C-20 and can transform shearone C into shearone G. The molecular scaffold is commonly biosynthesized by a series of enzymes including the non-reducing polyketide synthase (NR-PKS) esdpA that generates an alpha-pyrone; the prenyltransferase esdpC that attaches a geranylgeranyl pyrophosphate (GGPP) produced by the GGPP synthase (GGPPS) esdpD onto the pyrone unit; the FAD-dependent monooxygenase esdpE that converts an olefin on the diterpene unit into an epoxide; and the terpene cyclase esdpB that catalyzes the cyclization reactions to give the molecular backbone shearone A. In the modification steps, esdpF oxidizes the hydroxy group to a ketone at C-3 and esdpG then attaches hydroxy groups at both C-11 and C-12. After that, esdpI hydroxylates at C-20 and esdpH hydroxylates at C-6'. The ether bridge is generated by nucleophilic attack of the hydroxy group at C-20 to the carbonyl carbon at C-3. EsdpH can also functions prior to esdpI. The different combinations of these modification enzymes lead to the production of diverse shearone derivatives, shearone I being the end product of the pathway. The alpha-ketoglutarate-dependent dioxygenase esdpJ seems not to be involved in this pathway. The chain is Cytochrome P450 monooxygenase esdpI from Penicillium shearii (Eupenicillium shearii).